The primary structure comprises 120 residues: Prefoldin subunit beta (120 aa).

This sequence belongs to the prefoldin subunit beta family. Heterohexamer of two alpha and four beta subunits.

It localises to the cytoplasm. Functionally, molecular chaperone capable of stabilizing a range of proteins. Seems to fulfill an ATP-independent, HSP70-like function in archaeal de novo protein folding. This Methanothrix thermoacetophila (strain DSM 6194 / JCM 14653 / NBRC 101360 / PT) (Methanosaeta thermophila) protein is Prefoldin subunit beta.